A 369-amino-acid chain; its full sequence is Phospho-N-acetylmuramoyl-pentapeptide-transferase (369 aa).

Helical transmembrane passes span isoleucine 2–phenylalanine 22, threonine 55–methionine 75, alanine 86–isoleucine 106, leucine 122–alanine 142, isoleucine 158–tryptophan 178, leucine 196–isoleucine 216, proline 239–tryptophan 259, isoleucine 266–leucine 286, leucine 291–valine 311, and isoleucine 348–leucine 368.

This sequence belongs to the glycosyltransferase 4 family. MraY subfamily. Requires Mg(2+) as cofactor.

Its subcellular location is the cell membrane. It catalyses the reaction UDP-N-acetyl-alpha-D-muramoyl-L-alanyl-gamma-D-glutamyl-meso-2,6-diaminopimeloyl-D-alanyl-D-alanine + di-trans,octa-cis-undecaprenyl phosphate = di-trans,octa-cis-undecaprenyl diphospho-N-acetyl-alpha-D-muramoyl-L-alanyl-D-glutamyl-meso-2,6-diaminopimeloyl-D-alanyl-D-alanine + UMP. It functions in the pathway cell wall biogenesis; peptidoglycan biosynthesis. Its function is as follows. Catalyzes the initial step of the lipid cycle reactions in the biosynthesis of the cell wall peptidoglycan: transfers peptidoglycan precursor phospho-MurNAc-pentapeptide from UDP-MurNAc-pentapeptide onto the lipid carrier undecaprenyl phosphate, yielding undecaprenyl-pyrophosphoryl-MurNAc-pentapeptide, known as lipid I. The polypeptide is Phospho-N-acetylmuramoyl-pentapeptide-transferase (Arthrobacter sp. (strain FB24)).